The following is a 1916-amino-acid chain: Endoribonuclease Dicer (1916 aa).

Residues 51 to 227 enclose the Helicase ATP-binding domain; the sequence is LLEAALDHNT…ELEEKIQKLE (177 aa). An ATP-binding site is contributed by 64 to 71; that stretch reads LNTGSGKT. The DECH box motif lies at 175–178; sequence DECH. A required for interaction with PRKRA and TARBP2 region spans residues 256-595; the sequence is DCGPFTDRSG…LRNKCSKSAD (340 aa). The disordered stretch occupies residues 409–433; sequence YVSWSDSEDDDDDEEIEEKEKPETN. Phosphoserine is present on residues S413 and S415. The segment covering 414-425 has biased composition (acidic residues); it reads DSEDDDDDEEIE. Residues 433 to 602 form the Helicase C-terminal domain; that stretch reads NFPSPFTNIL…SADGAEADVH (170 aa). The region spanning 630–722 is the Dicer dsRNA-binding fold domain; it reads AIGHINRYCA…MPVGKETVKY (93 aa). Residues 726-745 are disordered; the sequence is LDLHDEEETSVPGRPGSTKR. A PAZ domain is found at 895-1042; sequence KFMEDIEKSE…LVPELCAIHP (148 aa). A phosphoserine mark is found at S1016 and S1160. Residues 1276 to 1403 form the RNase III 1 domain; sequence DSEQSPSVGY…SEKWEKDEMT (128 aa). Mg(2+)-binding residues include E1316, E1395, and E1398. A phosphoserine mark is found at S1456, S1464, and S1466. The tract at residues 1598 to 1626 is disordered; sequence ALDPAQENGSSQQKSLSGSCAAPVGPRSS. The segment covering 1604–1615 has biased composition (polar residues); sequence ENGSSQQKSLSG. One can recognise an RNase III 2 domain in the interval 1660–1818; that stretch reads FETFEKKINY…LAGAIYMDSG (159 aa). Mg(2+) contacts are provided by E1699, D1804, and E1807. One can recognise a DRBM domain in the interval 1843–1908; that stretch reads VPRSPVRELL…ARRALRSLKA (66 aa). S1862 carries the phosphoserine modification.

This sequence belongs to the helicase family. Dicer subfamily. Component of the RISC loading complex (RLC), or micro-RNA (miRNA) loading complex (miRLC), which is composed of DICER1, AGO2 and TARBP2; DICER1 and TARBP2 are required to process precursor miRNAs (pre-miRNAs) to mature miRNAs and then load them onto AGO2. Note that the trimeric RLC/miRLC is also referred to as RISC. Interacts with DHX9, AGO1, PIWIL1 and PRKRA. Interacts with AGO2, TARBP2, EIF6, MOV10 and RPL7A (60S ribosome subunit); they form a large RNA-induced silencing complex (RISC). Interacts with BCDIN3D. Interacts (via Dicer dsRNA-binding fold domain) with ALOX5 (via PLAT domain); this interaction enhances arachidonate 5-lipoxygenase activity and modifies the miRNA precursor processing activity of DICER1. Mg(2+) is required as a cofactor. Requires Mn(2+) as cofactor. Isoform 1 is expressed in a wide variety of tissues. Isoform 2 is specifically expressed in oocytes during their growth (at protein level).

It is found in the cytoplasm. It carries out the reaction Endonucleolytic cleavage to 5'-phosphomonoester.. Its function is as follows. Double-stranded RNA (dsRNA) endoribonuclease playing a central role in short dsRNA-mediated post-transcriptional gene silencing. Cleaves naturally occurring long dsRNAs and short hairpin pre-microRNAs (miRNA) into fragments of twenty-one to twenty-three nucleotides with 3' overhang of two nucleotides, producing respectively short interfering RNAs (siRNA) and mature microRNAs. SiRNAs and miRNAs serve as guide to direct the RNA-induced silencing complex (RISC) to complementary RNAs to degrade them or prevent their translation. Gene silencing mediated by siRNAs, also called RNA interference, controls the elimination of transcripts from mobile and repetitive DNA elements of the genome but also the degradation of exogenous RNA of viral origin for instance. The miRNA pathway on the other side is a mean to specifically regulate the expression of target genes. Functionally, more active than isoform 1 to process long double-stranded RNA into siRNAs. Responsible for the accumulation of endogenous siRNAs observed in mouse oocytes compared to somatic cells and it regulates meiotic spindle organization in female germline. This chain is Endoribonuclease Dicer (Dicer1), found in Mus musculus (Mouse).